Here is a 229-residue protein sequence, read N- to C-terminus: MWSLTVILLISYFLGSIPGALWSSKALHGVDIRNHGSHNCGATNAFRVVGWQAGALATVVDFGKGFLAAGVVASVIRIDPIPSGLSLFGGDPFVVLGLLAGVGAVIGHMYPIFARFEGGKGVNTAAGMLFALTPLTMAITLAVFVAVLLSSRYVSLSSITAAVAFPTIVALRRFGFGADLDPSLLVFGGLLALSIVVAHRSNIQRLLNGTESQISSFEPAQGMLGRGEL.

Transmembrane regions (helical) follow at residues 2–22 (WSLT…GALW), 56–76 (LATV…ASVI), 93–113 (FVVL…YPIF), 129–149 (LFAL…AVLL), 151–171 (SRYV…IVAL), and 178–198 (ADLD…IVVA).

The protein belongs to the PlsY family. In terms of assembly, probably interacts with PlsX.

It is found in the cell inner membrane. The catalysed reaction is an acyl phosphate + sn-glycerol 3-phosphate = a 1-acyl-sn-glycero-3-phosphate + phosphate. It participates in lipid metabolism; phospholipid metabolism. In terms of biological role, catalyzes the transfer of an acyl group from acyl-phosphate (acyl-PO(4)) to glycerol-3-phosphate (G3P) to form lysophosphatidic acid (LPA). This enzyme utilizes acyl-phosphate as fatty acyl donor, but not acyl-CoA or acyl-ACP. This Salinibacter ruber (strain DSM 13855 / M31) protein is Glycerol-3-phosphate acyltransferase.